An 810-amino-acid chain; its full sequence is Abnormal pharyngeal pumping eat-20 (810 aa).

A signal peptide spans 1 to 20 (MTTFCRVLLIFGIYVAVCCA). The Extracellular segment spans residues 21 to 748 (QSVEDDVFHF…GKQSSAAASW (728 aa)). N-linked (GlcNAc...) asparagine glycosylation is found at Asn-90, Asn-171, and Asn-232. EGF-like domains lie at 220–257 (PPSPCANHECHNNGTCLVSQEGAATCLCRNGFTGDRCE), 258–293 (LDVCSSVPCQNGGVCRSNNGIAYCECPPAFTGLLCE), and 301–335 (VAPICRPECSNGQCVFKDGQAQCECRQGFTGANCN). 9 disulfide bridges follow: Cys-224–Cys-235, Cys-229–Cys-245, Cys-247–Cys-256, Cys-261–Cys-272, Cys-266–Cys-281, Cys-283–Cys-292, Cys-305–Cys-314, Cys-309–Cys-323, and Cys-325–Cys-334. Asn-371 is a glycosylation site (N-linked (GlcNAc...) asparagine). The span at 522-531 (FAPTTGTQQP) shows a compositional bias: low complexity. Disordered stretches follow at residues 522-567 (FAPT…STMQ) and 684-738 (PHPQ…HTSS). The span at 542–558 (DENEEEEEEETTEETEE) shows a compositional bias: acidic residues. Residues 749 to 769 (IIAIIALIVLGLLLLATSLFI) traverse the membrane as a helical segment. Over 770-810 (LRYIRQSRKLHGKYNPAREEHNLSAAYAMPMSHIAKEERLI) the chain is Cytoplasmic.

In terms of tissue distribution, highly expressed in the pharynx, circumpharyngeal cells, pharyngeal-intestinal valve and a subset of neurons in larval and embryonic stages. Also moderately expressed in the lining of the intestine, coelomocytes, labial process bundles and some hypodermal cells. In adults, it is predominantly expressed in the pharynx, the pharyngeal-intenstinal valve, some circumpharyngeal cells, m3, m4 and m6 pharyngeal muscles, and IL1, OLQ, BAG and ALN neurons. Weaker expression is observed in labial process bundles, coelomocytes, the ventral hypodermal ridge, the vulval hypodermis and the sensory rays of the adult male tail.

It is found in the membrane. In terms of biological role, regulates pharyngeal pumping during feeding. The chain is Abnormal pharyngeal pumping eat-20 (eat-20) from Caenorhabditis elegans.